The chain runs to 266 residues: Translation initiation factor 2 subunit alpha (266 aa).

Residues 12–83 form the S1 motif domain; that stretch reads GDIVIGTVKD…RKGHIDLSLK (72 aa).

This sequence belongs to the eIF-2-alpha family. In terms of assembly, heterotrimer composed of an alpha, a beta and a gamma chain.

In terms of biological role, eIF-2 functions in the early steps of protein synthesis by forming a ternary complex with GTP and initiator tRNA. In Methanocaldococcus jannaschii (strain ATCC 43067 / DSM 2661 / JAL-1 / JCM 10045 / NBRC 100440) (Methanococcus jannaschii), this protein is Translation initiation factor 2 subunit alpha (eif2a).